A 239-amino-acid polypeptide reads, in one-letter code: Lactate utilization protein A (239 aa).

Belongs to the LutA/YkgE family.

Functionally, is involved in L-lactate degradation and allows cells to grow with lactate as the sole carbon source. The polypeptide is Lactate utilization protein A (Bacillus cereus (strain B4264)).